A 363-amino-acid chain; its full sequence is MSKNYHIAVLPGDGIGPEVMAQALKVMDAVRSRFDMRITTSRYDVGGIAIDNHGHPLPKATVEGCEQADAILFGSVGGPKWENLPPESQPERGALLPLRKHFKLFSNLRPAKLYQGLEAFCPLRADIAANGFDILCVRELTGGIYFGQPKGREGSGQYEKAFDTEVYHRFEIERIARIAFESARKRRRKVTSIDKANVLQSSILWREIVNDVAKAYPDVELAHMYIDNATMQLIKDPSQFDVLLCSNLFGDILSDECAMITGSMGMLPSASLNEQEFGLYEPAGGSAPDIAGKNIANPIAQILSLALLLRYSLDADEAATAIEQAINRALEEGVRTSDLARGAAAVSTDEMGDIIARYVAEGV.

Residue Gly78–Glu91 participates in NAD(+) binding. Positions 99, 109, 138, and 227 each coordinate substrate. Residues Asp227, Asp251, and Asp255 each coordinate Mg(2+). Gly285–Asn297 contributes to the NAD(+) binding site.

Belongs to the isocitrate and isopropylmalate dehydrogenases family. LeuB type 1 subfamily. Homodimer. Mg(2+) is required as a cofactor. Requires Mn(2+) as cofactor.

It is found in the cytoplasm. It carries out the reaction (2R,3S)-3-isopropylmalate + NAD(+) = 4-methyl-2-oxopentanoate + CO2 + NADH. Its pathway is amino-acid biosynthesis; L-leucine biosynthesis; L-leucine from 3-methyl-2-oxobutanoate: step 3/4. Functionally, catalyzes the oxidation of 3-carboxy-2-hydroxy-4-methylpentanoate (3-isopropylmalate) to 3-carboxy-4-methyl-2-oxopentanoate. The product decarboxylates to 4-methyl-2 oxopentanoate. The chain is 3-isopropylmalate dehydrogenase from Salmonella typhi.